The primary structure comprises 968 residues: Alanine--tRNA ligase, cytoplasmic (968 aa).

ATP is bound by residues R77, H95, W176, and 214 to 216 (IWN). Residues N216 and D239 each coordinate L-alanine. Residue G243 participates in ATP binding. 4 residues coordinate Zn(2+): H606, H610, C724, and H728.

Belongs to the class-II aminoacyl-tRNA synthetase family. As to quaternary structure, monomer. Zn(2+) serves as cofactor.

It localises to the cytoplasm. The enzyme catalyses tRNA(Ala) + L-alanine + ATP = L-alanyl-tRNA(Ala) + AMP + diphosphate. In terms of biological role, catalyzes the attachment of alanine to tRNA(Ala) in a two-step reaction: alanine is first activated by ATP to form Ala-AMP and then transferred to the acceptor end of tRNA(Ala). Also edits incorrectly charged tRNA(Ala) via its editing domain. This is Alanine--tRNA ligase, cytoplasmic from Caenorhabditis elegans.